The following is a 1224-amino-acid chain: Potassium channel subfamily T member 1 (1224 aa).

The interval 1–37 is disordered; sequence MARAKLPRSPSEGKAGPGDTPAGAAAPEEPHGLSPLL. Residues 1–79 are Cytoplasmic-facing; that stretch reads MARAKLPRSP…LFFIKNQRSS (79 aa). Positions 13-27 are enriched in low complexity; that stretch reads GKAGPGDTPAGAAAP. The chain crosses the membrane as a helical span at residues 80 to 112; sequence LRIRLFNFSLKLLTCLLYIVRVLLDNPDQGIGC. Topologically, residues 113–139 are extracellular; sequence WGCTKYNYTFNGSSSEFHWAPILWVER. Asn-119 and Asn-123 each carry an N-linked (GlcNAc...) asparagine glycan. The helical transmembrane segment at 140-164 threads the bilayer; the sequence is KMALWVIQVIVATISFLETMLIIYL. Residues 165 to 178 lie on the Cytoplasmic side of the membrane; that stretch reads SYKGNIWEQIFHVS. A helical transmembrane segment spans residues 179 to 194; it reads FVLEMINTLPFIITVF. The Extracellular segment spans residues 195 to 201; it reads WPPLRNL. Residues 202-219 form a helical membrane-spanning segment; the sequence is FIPVFLNCWLAKHALENM. The Cytoplasmic segment spans residues 220 to 232; sequence INDFHRAILRTQS. A helical membrane pass occupies residues 233–260; the sequence is AMFNQVLILFCTLLCLVFTGTCGIQHLE. Residues 261–267 are Extracellular-facing; it reads RAGGNLN. The pore-forming intramembrane region spans 268–288; that stretch reads LLTSFYFCIVTFSTVGFGDVT. Residues Val-282 and Gly-283 each coordinate K(+). At 289–290 the chain is on the extracellular side; the sequence is PK. Residues 291-324 form a helical membrane-spanning segment; sequence IWPSQLLVVILICVTLVVLPLQFEELVYLWMERQ. Residues 325–1224 are Cytoplasmic-facing; it reads KSGGNYSRHR…NPETRDETQL (900 aa). The 137-residue stretch at 338-474 folds into the RCK N-terminal 1 domain; the sequence is EKHVVLCVSS…FHVKFADHVV (137 aa). Residues Leu-499, His-502, Ser-524, and Asn-526 each contribute to the Na(+) site. The disordered stretch occupies residues 644–675; that stretch reads QNTDCRPSQGGSGGDGTKLTLPTENGSGSRRP. Residues 663–673 show a composition bias toward polar residues; that stretch reads TLPTENGSGSR. Zn(2+)-binding residues include Cys-744 and Cys-745. Arg-747 and Lys-750 together coordinate K(+). Na(+)-binding residues include Arg-747 and Lys-750. Residues Cys-752 and His-754 each coordinate Zn(2+). The K(+) site is built by Asn-755, Tyr-757, Tyr-763, and Gly-764. Position 757 (Tyr-757) interacts with Na(+). Phe-765 serves as a coordination point for Na(+). Positions 767 to 907 constitute an RCK N-terminal 2 domain; sequence NKLIIVSAET…QFRAKDSYSL (141 aa). K(+) is bound by residues Ser-773, Leu-804, Asp-806, Gly-828, and Asp-851. 2 disordered regions span residues 1038 to 1066 and 1198 to 1224; these read REAKGPWGTRAASGSGSTHGRHGGSADPV and SSSQSRKSSCSNKLSSCNPETRDETQL. 2 stretches are compositionally biased toward low complexity: residues 1045–1055 and 1198–1215; these read GTRAASGSGST and SSSQSRKSSCSNKLSSCN.

The protein belongs to the potassium channel family. Calcium-activated (TC 1.A.1.3) subfamily. KCa4.1/KCNT1 sub-subfamily. As to quaternary structure, homotetramer; which constitutes the Na(+)-activated K(+) channel. Interacts with KCNT2; these heterodimer channels differ from the homomers in their unitary conductance, kinetic behavior, subcellular localization, and response to activation of protein kinase C. Interacts (via C-terminus) with FMR1; this interaction alters gating properties of KCNT1. Interacts with CRBN via its cytoplasmic C-terminus. Post-translationally, phosphorylated by protein kinase C. Phosphorylation of the C-terminal domain increases channel activity. Enriched in the brainstem and olfactory bulb and detected at significant levels in four different brain regions.

The protein resides in the cell membrane. It carries out the reaction K(+)(in) = K(+)(out). With respect to regulation, activated by high intracellular Na(+). In addition to activation by Na(+), is cooperatively activated by intracellular Cl(-) levels. Inhibited by Zn(2+). Activated upon stimulation of G-protein coupled receptors, such as CHRM1 and GRIA1. Sodium-activated K(+) channel. Acts as an important mediator of neuronal membrane excitability. Contributes to the delayed outward currents. Regulates neuronal bursting in sensory neurons. Contributes to synaptic development and plasticity. The polypeptide is Potassium channel subfamily T member 1 (Kcnt1) (Mus musculus (Mouse)).